We begin with the raw amino-acid sequence, 82 residues long: Large ribosomal subunit protein uL23 (82 aa).

This sequence belongs to the universal ribosomal protein uL23 family. As to quaternary structure, part of the 50S ribosomal subunit. Contacts protein L29.

Functionally, binds to 23S rRNA. One of the proteins that surrounds the polypeptide exit tunnel on the outside of the ribosome. The chain is Large ribosomal subunit protein uL23 from Methanosarcina barkeri (strain Fusaro / DSM 804).